A 91-amino-acid chain; its full sequence is Islet amyloid polypeptide (91 aa).

The signal sequence occupies residues Met-1 to Gly-22. Positions Gly-23–Glu-33 are excised as a propeptide. Cys-37 and Cys-42 form a disulfide bridge. Tyr-72 is subject to Tyrosine amide. The propeptide occupies Val-78–Ile-91.

The protein belongs to the calcitonin family. As to quaternary structure, can form homodimers. Interacts with IDE and INS. Interaction with INS inhibits homodimerization and fibril formation.

Its subcellular location is the secreted. Functionally, amylin/IAPP is a glucoregulatory peptide hormone that plays an important role in the regulation of energy homeostasis. Selectively inhibits insulin-stimulated glucose utilization and glycogen deposition in muscle, while not affecting adipocyte glucose metabolism. IAPP function is mediated by the CALCR-RAMPs (AMYRs) receptor complexes. Amylin can also bind CALCR receptor in the absence of RAMPs, although it is more selective for AMYRs. The chain is Islet amyloid polypeptide (IAPP) from Bos taurus (Bovine).